The chain runs to 214 residues: Dephospho-CoA kinase (214 aa).

In terms of domain architecture, DPCK spans 20–214 (RIGITGGIAS…KLQLKKLYKF (195 aa)). 28–33 (ASGKTI) serves as a coordination point for ATP.

This sequence belongs to the CoaE family.

The protein localises to the cytoplasm. It carries out the reaction 3'-dephospho-CoA + ATP = ADP + CoA + H(+). Its pathway is cofactor biosynthesis; coenzyme A biosynthesis; CoA from (R)-pantothenate: step 5/5. Catalyzes the phosphorylation of the 3'-hydroxyl group of dephosphocoenzyme A to form coenzyme A. This Prochlorococcus marinus (strain NATL2A) protein is Dephospho-CoA kinase.